The sequence spans 99 residues: Class II hydrophobin 3 (99 aa).

Positions 1 to 18 (MRIDILATAALLAQLASA) are cleaved as a signal peptide. 3 disulfides stabilise this stretch: Cys31–Cys79, Cys40–Cys70, and Cys41–Cys53.

It belongs to the cerato-ulmin hydrophobin family. Homodimer. Homodimers further self-assemble to form highly ordered films at water-air interfaces through intermolecular interactions.

The protein localises to the secreted. Its subcellular location is the cell wall. In terms of biological role, aerial growth, conidiation, and dispersal of filamentous fungi in the environment rely upon a capability of their secreting small amphipathic proteins called hydrophobins (HPBs) with low sequence identity. Class I can self-assemble into an outermost layer of rodlet bundles on aerial cell surfaces, conferring cellular hydrophobicity that supports fungal growth, development and dispersal; whereas Class II form highly ordered films at water-air interfaces through intermolecular interactions but contribute nothing to the rodlet structure. Hyd3 is a class II hydrophobin required for barley root colonization. Hyd1 and Hyd3 are jointly required for conidial hydrophobicity and dispersal, but seem not to be involved in mycelia hydrophobicity. Inhibits conidial germination in environments not suitable for mycelial growth. Plays probably a role in intraspecific signaling or hyphal fusion. This is Class II hydrophobin 3 from Bionectria ochroleuca (Gliocladium roseum).